The sequence spans 103 residues: Large ribosomal subunit protein uL24 (103 aa).

This sequence belongs to the universal ribosomal protein uL24 family. Part of the 50S ribosomal subunit.

In terms of biological role, one of two assembly initiator proteins, it binds directly to the 5'-end of the 23S rRNA, where it nucleates assembly of the 50S subunit. Functionally, one of the proteins that surrounds the polypeptide exit tunnel on the outside of the subunit. The protein is Large ribosomal subunit protein uL24 of Alkaliphilus metalliredigens (strain QYMF).